We begin with the raw amino-acid sequence, 174 residues long: Ribosomal RNA large subunit methyltransferase H (174 aa).

S-adenosyl-L-methionine is bound by residues Leu90, Gly122, and 141–146 (LGELTW).

The protein belongs to the RNA methyltransferase RlmH family. In terms of assembly, homodimer.

The protein localises to the cytoplasm. It carries out the reaction pseudouridine(1915) in 23S rRNA + S-adenosyl-L-methionine = N(3)-methylpseudouridine(1915) in 23S rRNA + S-adenosyl-L-homocysteine + H(+). Specifically methylates the pseudouridine at position 1915 (m3Psi1915) in 23S rRNA. The polypeptide is Ribosomal RNA large subunit methyltransferase H (Brucella melitensis biotype 2 (strain ATCC 23457)).